We begin with the raw amino-acid sequence, 277 residues long: C2H2-type zinc-finger transcription factor (277 aa).

Disordered stretches follow at residues 23–66 (PTMN…AHPP) and 78–146 (MNEP…TDSI). Over residues 27–37 (EIETTDNTYPR) the composition is skewed to polar residues. A C2H2-type; degenerate zinc finger spans residues 185 to 208 (HPCPDCGRVFTRSTARNFHRQSGT).

It belongs to the GLI C2H2-type zinc-finger protein family.

It is found in the nucleus. In terms of biological role, C2H2-type zinc-finger transcription factor that controls the expression of the nonribosomal peptide synthases inpA and inpB, as well as of the other inp cluster-associated genes. Also mediates the expression of the asperfuranone biosynthesis gene cluster by binding to the afoA promoter. Probably recognizes the 5'-CT/C/AAAAGGAT/AT/GG/CA-3' motif in the promoters of teget genes. The sequence is that of C2H2-type zinc-finger transcription factor from Emericella nidulans (strain FGSC A4 / ATCC 38163 / CBS 112.46 / NRRL 194 / M139) (Aspergillus nidulans).